A 200-amino-acid polypeptide reads, in one-letter code: Pyrrolidone-carboxylate peptidase (200 aa).

Catalysis depends on residues Glu78, Cys141, and His165.

Belongs to the peptidase C15 family. In terms of assembly, homotetramer.

Its subcellular location is the cytoplasm. The catalysed reaction is Release of an N-terminal pyroglutamyl group from a polypeptide, the second amino acid generally not being Pro.. Its function is as follows. Removes 5-oxoproline from various penultimate amino acid residues except L-proline. The chain is Pyrrolidone-carboxylate peptidase from Lactobacillus acidophilus (strain ATCC 700396 / NCK56 / N2 / NCFM).